The following is a 1158-amino-acid chain: ATP-dependent helicase/deoxyribonuclease subunit B (1158 aa).

This sequence belongs to the helicase family. AddB/RexB type 2 subfamily. Heterodimer of AddA and RexB. Requires Mg(2+) as cofactor.

Functionally, the heterodimer acts as both an ATP-dependent DNA helicase and an ATP-dependent, dual-direction single-stranded exonuclease. Recognizes the chi site generating a DNA molecule suitable for the initiation of homologous recombination. This subunit has 5' -&gt; 3' nuclease activity but not helicase activity. This is ATP-dependent helicase/deoxyribonuclease subunit B from Lactobacillus johnsonii (strain CNCM I-12250 / La1 / NCC 533).